Consider the following 101-residue polypeptide: NADH-quinone oxidoreductase subunit K (101 aa).

Transmembrane regions (helical) follow at residues 4-24 (LTHF…GIFL), 30-50 (IILL…FIAF), and 61-81 (IFVF…LAIL).

This sequence belongs to the complex I subunit 4L family. As to quaternary structure, NDH-1 is composed of 14 different subunits. Subunits NuoA, H, J, K, L, M, N constitute the membrane sector of the complex.

Its subcellular location is the cell inner membrane. The catalysed reaction is a quinone + NADH + 5 H(+)(in) = a quinol + NAD(+) + 4 H(+)(out). NDH-1 shuttles electrons from NADH, via FMN and iron-sulfur (Fe-S) centers, to quinones in the respiratory chain. The immediate electron acceptor for the enzyme in this species is believed to be ubiquinone. Couples the redox reaction to proton translocation (for every two electrons transferred, four hydrogen ions are translocated across the cytoplasmic membrane), and thus conserves the redox energy in a proton gradient. The chain is NADH-quinone oxidoreductase subunit K from Chromobacterium violaceum (strain ATCC 12472 / DSM 30191 / JCM 1249 / CCUG 213 / NBRC 12614 / NCIMB 9131 / NCTC 9757 / MK).